A 138-amino-acid polypeptide reads, in one-letter code: Ribulose bisphosphate carboxylase small subunit (138 aa).

This sequence belongs to the RuBisCO small chain family. In terms of assembly, heterohexadecamer of 8 large and 8 small subunits.

The protein resides in the plastid. Its subcellular location is the chloroplast. RuBisCO catalyzes two reactions: the carboxylation of D-ribulose 1,5-bisphosphate, the primary event in carbon dioxide fixation, as well as the oxidative fragmentation of the pentose substrate in the photorespiration process. Both reactions occur simultaneously and in competition at the same active site. Although the small subunit is not catalytic it is essential for maximal activity. In Porphyra purpurea (Red seaweed), this protein is Ribulose bisphosphate carboxylase small subunit.